We begin with the raw amino-acid sequence, 148 residues long: SsrA-binding protein (148 aa).

Basic and acidic residues predominate over residues 127 to 142 (KRESEKERDWERDKAR). The segment at 127 to 148 (KRESEKERDWERDKARLMRVKT) is disordered.

Belongs to the SmpB family.

The protein localises to the cytoplasm. Functionally, required for rescue of stalled ribosomes mediated by trans-translation. Binds to transfer-messenger RNA (tmRNA), required for stable association of tmRNA with ribosomes. tmRNA and SmpB together mimic tRNA shape, replacing the anticodon stem-loop with SmpB. tmRNA is encoded by the ssrA gene; the 2 termini fold to resemble tRNA(Ala) and it encodes a 'tag peptide', a short internal open reading frame. During trans-translation Ala-aminoacylated tmRNA acts like a tRNA, entering the A-site of stalled ribosomes, displacing the stalled mRNA. The ribosome then switches to translate the ORF on the tmRNA; the nascent peptide is terminated with the 'tag peptide' encoded by the tmRNA and targeted for degradation. The ribosome is freed to recommence translation, which seems to be the essential function of trans-translation. This Aromatoleum aromaticum (strain DSM 19018 / LMG 30748 / EbN1) (Azoarcus sp. (strain EbN1)) protein is SsrA-binding protein.